We begin with the raw amino-acid sequence, 149 residues long: Transcriptional regulator MraZ (149 aa).

SpoVT-AbrB domains follow at residues 6–52 and 81–124; these read RSHR…PYPD and AEEM…DQSK.

This sequence belongs to the MraZ family. Forms oligomers.

The protein localises to the cytoplasm. The protein resides in the nucleoid. The protein is Transcriptional regulator MraZ of Nitratidesulfovibrio vulgaris (strain ATCC 29579 / DSM 644 / CCUG 34227 / NCIMB 8303 / VKM B-1760 / Hildenborough) (Desulfovibrio vulgaris).